The sequence spans 375 residues: Trichodiene synthase (375 aa).

It belongs to the trichodiene synthase family.

The catalysed reaction is (2E,6E)-farnesyl diphosphate = trichodiene + diphosphate. It participates in sesquiterpene biosynthesis; trichothecene biosynthesis. Functionally, TS is a member of the terpene cyclase group of enzymes. It catalyzes the isomerization and cyclization of farnesyl pyro-phosphate to form trichodiene, the first cyclic intermediate in the biosynthetic pathway for trichothecenes. It serves to branch trichothecene biosynthesis from the isoprenoid pathway. In Fusarium culmorum, this protein is Trichodiene synthase (TRI5).